Consider the following 354-residue polypeptide: Membrane progestin receptor alpha-B (354 aa).

The Cytoplasmic segment spans residues 1-76 (MATVVMEQIG…LTLFQRHNES (76 aa)). Residues 77–97 (VNVWTHLLASLIILVKFQELS) form a helical membrane-spanning segment. Residues 98–110 (ETVDFLRDPHAQP) are Extracellular-facing. The chain crosses the membrane as a helical span at residues 111-131 (MFILLLAAFTYLGCSALAHLL). The Cytoplasmic portion of the chain corresponds to 132 to 141 (SAKSEISHYT). Residues 142 to 162 (FYFLDYVGVAVYQYGSALAHF) form a helical membrane-spanning segment. The Extracellular portion of the chain corresponds to 163–175 (YYVVEEEWHAQVR). Residues 176-196 (TFFLPASAFLAWLSCTGCCYG) traverse the membrane as a helical segment. At 197 to 244 (KYASPKLPKFVHKLFQVVPSGLAYCLDISPVLHRIYRCYSSEHWCADQ) the chain is on the cytoplasmic side. The helical transmembrane segment at 245 to 265 (AVVYHCYQVLFFLISAYFFSY) threads the bilayer. Over 266–277 (PHPERWFPGRCD) the chain is Extracellular. Residues 278-298 (FIGQGHQIFHVFLVLCTLVQI) form a helical membrane-spanning segment. Residues 299-318 (EAVRLDYTERRRLYEHLHGD) are Cytoplasmic-facing. A helical transmembrane segment spans residues 319 to 339 (LAHDAVALFIFTACCSALTAF). The Extracellular portion of the chain corresponds to 340–354 (YVRKRVKTYLEEKQE).

The protein belongs to the ADIPOR family.

It is found in the cell membrane. In terms of biological role, steroid membrane receptor. Signals upon progestin binding, resulting in rapid activation of MAPK and down-regulation of adenylyl cyclase activity. Interacts with steroids with varying degrees of affinity, showing specificity for activation by the maturation-inducing steroid (MIS) 4-pregnen-17,20beta-diol-3-one (17,20beta-DHP). Capable of mediating progestin-induced oocyte maturation. This Danio rerio (Zebrafish) protein is Membrane progestin receptor alpha-B (paqr7b).